Here is an 85-residue protein sequence, read N- to C-terminus: Probable oxaloacetate decarboxylase gamma chain (85 aa).

Residues 15–35 (ISGMGFVLLFLIVLIYAISFI) traverse the membrane as a helical segment.

This sequence belongs to the OadG family. Heterotrimer of an alpha, a beta and a gamma subunit. Na(+) is required as a cofactor.

Its subcellular location is the cell membrane. It carries out the reaction oxaloacetate + 2 Na(+)(in) + H(+) = pyruvate + 2 Na(+)(out) + CO2. Functionally, catalyzes the decarboxylation of oxaloacetate coupled to Na(+) translocation. The chain is Probable oxaloacetate decarboxylase gamma chain from Actinobacillus pleuropneumoniae serotype 5b (strain L20).